The following is a 155-amino-acid chain: Ribosome maturation factor RimP (155 aa).

This sequence belongs to the RimP family.

The protein resides in the cytoplasm. Functionally, required for maturation of 30S ribosomal subunits. The chain is Ribosome maturation factor RimP from Staphylococcus epidermidis (strain ATCC 35984 / DSM 28319 / BCRC 17069 / CCUG 31568 / BM 3577 / RP62A).